The chain runs to 609 residues: Adagio protein 1 (609 aa).

The span at M1–L17 shows a compositional bias: low complexity. Residues M1 to G24 form a disordered region. Residues I32–G114 enclose the PAS domain. C82 is modified (S-4a-FMN cysteine). Residues Q118–I161 form the PAC domain. The F-box domain occupies C195–V241. Kelch repeat units follow at residues S292–P342, R345–A392, R397–W445, R450–G501, and R516–G564.

The protein belongs to the ADAGIO family. In terms of assembly, interacts with NFXL2. Interacts (via N-terminus) with GI and (via Kelch repeats) with ADO3. Component of an E3 ubiquitin ligase SCF(ADO1) complex composed of SKP1A/ASK1 (or SKP1B/ASK2), CUL1, RBX1 and ADO1. Also interacts with SKP1D/ASK4, SKP1K/ASK11, CRY1, PHYB, APRR1 and APRR5, and probably with SKP1N/ASK14 and SKP1S/ASK19. Post-translationally, may be ubiquitinated. Degraded in a proteasome-dependent manner. In terms of processing, FMN binds covalently to cysteine after exposure to blue light and is reversed in the dark. Ubiquitously expressed with higher levels in cotyledons and leaves.

Its subcellular location is the nucleus. The protein resides in the cytoplasm. The protein operates within protein modification; protein ubiquitination. In terms of biological role, component of an E3 ubiquitin ligase complex that plays a central role in blue light-dependent circadian cycles. Acts as a blue light photoreceptor, due to the presence of FMN, that mediates light-regulated protein degradation of critical clock components by targeting them to the proteasome complex. The SCF(ADO1) E3 ubiquitin ligase complex is involved in the regulation of circadian clock-dependent processes including the transition to flowering time, hypocotyl elongation, cotyledons and leaf movement rhythms. APRR1/TOC1 and APRR5, but not 'GIGANTEA', are proteolytic substrates of this ubiquitin ligase complex. Blue light enhances cooperative stabilization of 'GIGANTEA' and ADO1/ZTL, leading to amplification and sharpening of the expression profile of APRR1/TOC1. ADO1/ZTL interacts with ADO3, preventing the interaction of ADO3 with CDF1. In Arabidopsis thaliana (Mouse-ear cress), this protein is Adagio protein 1 (ADO1).